Here is a 591-residue protein sequence, read N- to C-terminus: Aspartate--tRNA ligase (591 aa).

L-aspartate is bound at residue Glu173. The segment at 197–200 (QLFK) is aspartate. L-aspartate is bound at residue Arg219. Residues 219-221 (RDE) and Gln228 each bind ATP. His448 is an L-aspartate binding site. ATP is bound at residue Glu482. An L-aspartate-binding site is contributed by Arg489. An ATP-binding site is contributed by 534 to 537 (GLDR).

It belongs to the class-II aminoacyl-tRNA synthetase family. Type 1 subfamily. In terms of assembly, homodimer.

The protein resides in the cytoplasm. It carries out the reaction tRNA(Asp) + L-aspartate + ATP = L-aspartyl-tRNA(Asp) + AMP + diphosphate. Catalyzes the attachment of L-aspartate to tRNA(Asp) in a two-step reaction: L-aspartate is first activated by ATP to form Asp-AMP and then transferred to the acceptor end of tRNA(Asp). The polypeptide is Aspartate--tRNA ligase (Shewanella sp. (strain ANA-3)).